Reading from the N-terminus, the 340-residue chain is Phenylalanine--tRNA ligase alpha subunit (340 aa).

Glu251 lines the Mg(2+) pocket.

It belongs to the class-II aminoacyl-tRNA synthetase family. Phe-tRNA synthetase alpha subunit type 1 subfamily. Tetramer of two alpha and two beta subunits. Requires Mg(2+) as cofactor.

It localises to the cytoplasm. The enzyme catalyses tRNA(Phe) + L-phenylalanine + ATP = L-phenylalanyl-tRNA(Phe) + AMP + diphosphate + H(+). This chain is Phenylalanine--tRNA ligase alpha subunit, found in Porphyromonas gingivalis (strain ATCC 33277 / DSM 20709 / CIP 103683 / JCM 12257 / NCTC 11834 / 2561).